The following is a 659-amino-acid chain: ATP-binding cassette sub-family D member 3 (659 aa).

The interaction with PEX19 stretch occupies residues M1–K61. A glycan (N-linked (GlcNAc...) asparagine) is linked at N12. K61 carries the N6-acetyllysine modification. Residues G84 to I104 traverse the membrane as a helical segment. Positions Y85–G372 constitute an ABC transmembrane type-1 domain. A glycan (N-linked (GlcNAc...) asparagine) is linked at N106. A helical membrane pass occupies residues L126–G146. A glycan (N-linked (GlcNAc...) asparagine) is linked at N206. Residues A224–L244 form a helical membrane-spanning segment. K260 bears the N6-acetyllysine mark. The chain crosses the membrane as a helical span at residues M313 to V333. The residue at position 399 (K399) is an N6-acetyllysine. In terms of domain architecture, ABC transporter spans I440–S659. G473 to S480 is a binding site for ATP. K533 is subject to N6-acetyllysine. Residue S659 is modified to Phosphoserine.

Belongs to the ABC transporter superfamily. ABCD family. Peroxisomal fatty acyl CoA transporter (TC 3.A.1.203) subfamily. As to quaternary structure, homodimers. Can form heterodimers with ABCD1 and ABCD2. Dimerization is necessary to form an active transporter. Interacts with PEX19; mediates the targeting of ABCD3 to peroxisomes. Post-translationally, ubiquitinated by PEX2 during pexophagy in response to starvation, leading to its degradation.

The protein localises to the peroxisome membrane. It carries out the reaction a very long-chain fatty acyl-CoA + H2O = a very long-chain fatty acid + CoA + H(+). The catalysed reaction is a very long-chain fatty acid(in) + ATP + H2O = a very long-chain fatty acid(out) + ADP + phosphate + H(+). It catalyses the reaction a long-chain fatty acyl-CoA + H2O = a long-chain fatty acid + CoA + H(+). The enzyme catalyses a long-chain fatty acid(in) + ATP + H2O = a long-chain fatty acid(out) + ADP + phosphate + H(+). It carries out the reaction pristanoyl-CoA + H2O = 2,6,10,14-tetramethylpentadecanoate + CoA + H(+). The catalysed reaction is 2,6,10,14-tetramethylpentadecanoate(in) + ATP + H2O = 2,6,10,14-tetramethylpentadecanoate(out) + ADP + phosphate + H(+). It catalyses the reaction hexadecanedioyl-CoA + H2O = hexadecanedioate + CoA + H(+). The enzyme catalyses hexadecanedioate(in) + ATP + H2O = hexadecanedioate(out) + ADP + phosphate + H(+). It carries out the reaction (5Z,8Z,11Z,14Z,17Z)-eicosapentaenoyl-CoA + H2O = (5Z,8Z,11Z,14Z,17Z)-eicosapentaenoate + CoA + H(+). The catalysed reaction is (5Z,8Z,11Z,14Z,17Z)-eicosapentaenoate(in) + ATP + H2O = (5Z,8Z,11Z,14Z,17Z)-eicosapentaenoate(out) + ADP + phosphate + H(+). It catalyses the reaction (4Z,7Z,10Z,13Z,16Z,19Z)-docosahexaenoyl-CoA + H2O = (4Z,7Z,10Z,13Z,16Z,19Z)-docosahexaenoate + CoA + H(+). The enzyme catalyses (4Z,7Z,10Z,13Z,16Z,19Z)-docosahexaenoate(in) + ATP + H2O = (4Z,7Z,10Z,13Z,16Z,19Z)-docosahexaenoate(out) + ADP + phosphate + H(+). In terms of biological role, broad substrate specificity ATP-dependent transporter of the ATP-binding cassette (ABC) family that catalyzes the transport of long-chain fatty acids (LCFA)-CoA, dicarboxylic acids-CoA, long-branched-chain fatty acids-CoA and bile acids from the cytosol to the peroxisome lumen for beta-oxydation. Has fatty acyl-CoA thioesterase and ATPase activities. Probably hydrolyzes fatty acyl-CoAs into free fatty acids prior to their ATP-dependent transport into peroxisomes. Thus, play a role in regulation of LCFAs and energy metabolism namely, in the degradation and biosynthesis of fatty acids by beta-oxidation. This is ATP-binding cassette sub-family D member 3 from Homo sapiens (Human).